The sequence spans 633 residues: Glutamyl-tRNA(Gln) amidotransferase subunit E (633 aa).

The protein belongs to the GatB/GatE family. GatE subfamily. In terms of assembly, heterodimer of GatD and GatE.

The enzyme catalyses L-glutamyl-tRNA(Gln) + L-glutamine + ATP + H2O = L-glutaminyl-tRNA(Gln) + L-glutamate + ADP + phosphate + H(+). Functionally, allows the formation of correctly charged Gln-tRNA(Gln) through the transamidation of misacylated Glu-tRNA(Gln) in organisms which lack glutaminyl-tRNA synthetase. The reaction takes place in the presence of glutamine and ATP through an activated gamma-phospho-Glu-tRNA(Gln). The GatDE system is specific for glutamate and does not act on aspartate. This Saccharolobus islandicus (strain L.S.2.15 / Lassen #1) (Sulfolobus islandicus) protein is Glutamyl-tRNA(Gln) amidotransferase subunit E.